The primary structure comprises 98 residues: MSLVYVNIMIAFSVSFLGLLMFRSHLMSSLLCLEGMMLSLFILGTILILNFHFTLASMAPIIMLVFAACEAAVGLSLLVMVSNTYGVDYVQNLNLLQC.

Transmembrane regions (helical) follow at residues 2–22, 29–49, and 61–81; these read SLVY…LLMF, SLLC…ILIL, and IIML…LVMV.

It belongs to the complex I subunit 4L family. In terms of assembly, core subunit of respiratory chain NADH dehydrogenase (Complex I) which is composed of 45 different subunits.

It localises to the mitochondrion inner membrane. It carries out the reaction a ubiquinone + NADH + 5 H(+)(in) = a ubiquinol + NAD(+) + 4 H(+)(out). Its function is as follows. Core subunit of the mitochondrial membrane respiratory chain NADH dehydrogenase (Complex I) which catalyzes electron transfer from NADH through the respiratory chain, using ubiquinone as an electron acceptor. Part of the enzyme membrane arm which is embedded in the lipid bilayer and involved in proton translocation. This Galemys pyrenaicus (Iberian desman) protein is NADH-ubiquinone oxidoreductase chain 4L (MT-ND4L).